We begin with the raw amino-acid sequence, 373 residues long: 4-hydroxy-3-methylbut-2-en-1-yl diphosphate synthase (flavodoxin) (373 aa).

Residues Cys-270, Cys-273, Cys-305, and Glu-312 each contribute to the [4Fe-4S] cluster site.

Belongs to the IspG family. It depends on [4Fe-4S] cluster as a cofactor.

It catalyses the reaction (2E)-4-hydroxy-3-methylbut-2-enyl diphosphate + oxidized [flavodoxin] + H2O + 2 H(+) = 2-C-methyl-D-erythritol 2,4-cyclic diphosphate + reduced [flavodoxin]. The protein operates within isoprenoid biosynthesis; isopentenyl diphosphate biosynthesis via DXP pathway; isopentenyl diphosphate from 1-deoxy-D-xylulose 5-phosphate: step 5/6. In terms of biological role, converts 2C-methyl-D-erythritol 2,4-cyclodiphosphate (ME-2,4cPP) into 1-hydroxy-2-methyl-2-(E)-butenyl 4-diphosphate. This chain is 4-hydroxy-3-methylbut-2-en-1-yl diphosphate synthase (flavodoxin), found in Vibrio atlanticus (strain LGP32) (Vibrio splendidus (strain Mel32)).